A 456-amino-acid polypeptide reads, in one-letter code: Methionine aminopeptidase 2 (456 aa).

A compositionally biased stretch (pro residues) spans 1–11 (MTIPVPKPAHP). Positions 1-127 (MTIPVPKPAH…SYRTTSSEKR (127 aa)) are disordered. A compositionally biased stretch (acidic residues) spans 31–45 (EADEEEDDDDEEGKE). The span at 66-79 (KKKKKKKKKPKKKK) shows a compositional bias: basic residues. A substrate-binding site is contributed by histidine 209. Aspartate 229, aspartate 240, and histidine 309 together coordinate a divalent metal cation. Histidine 317 is a binding site for substrate. Residues glutamate 343 and glutamate 437 each contribute to the a divalent metal cation site.

It belongs to the peptidase M24A family. Methionine aminopeptidase eukaryotic type 2 subfamily. Co(2+) is required as a cofactor. It depends on Zn(2+) as a cofactor. The cofactor is Mn(2+). Requires Fe(2+) as cofactor.

Its subcellular location is the cytoplasm. It carries out the reaction Release of N-terminal amino acids, preferentially methionine, from peptides and arylamides.. Cotranslationally removes the N-terminal methionine from nascent proteins. The N-terminal methionine is often cleaved when the second residue in the primary sequence is small and uncharged (Met-Ala-, Cys, Gly, Pro, Ser, Thr, or Val). The protein is Methionine aminopeptidase 2 of Puccinia graminis f. sp. tritici (strain CRL 75-36-700-3 / race SCCL) (Black stem rust fungus).